The sequence spans 339 residues: Ketol-acid reductoisomerase (NADP(+)) (339 aa).

Positions 1–182 (MRVYYDRDAD…GGGRAGIIET (182 aa)) constitute a KARI N-terminal Rossmann domain. Residues 24–27 (YGSQ), Arg48, Ser51, Ser53, and 83–86 (DELQ) each bind NADP(+). His108 is an active-site residue. Gly134 lines the NADP(+) pocket. In terms of domain architecture, KARI C-terminal knotted spans 183-328 (SFREETETDL…ARLRDMMPWI (146 aa)). Positions 191, 195, 227, and 231 each coordinate Mg(2+). Ser252 contributes to the substrate binding site.

Belongs to the ketol-acid reductoisomerase family. Requires Mg(2+) as cofactor.

It carries out the reaction (2R)-2,3-dihydroxy-3-methylbutanoate + NADP(+) = (2S)-2-acetolactate + NADPH + H(+). The catalysed reaction is (2R,3R)-2,3-dihydroxy-3-methylpentanoate + NADP(+) = (S)-2-ethyl-2-hydroxy-3-oxobutanoate + NADPH + H(+). It functions in the pathway amino-acid biosynthesis; L-isoleucine biosynthesis; L-isoleucine from 2-oxobutanoate: step 2/4. It participates in amino-acid biosynthesis; L-valine biosynthesis; L-valine from pyruvate: step 2/4. Its function is as follows. Involved in the biosynthesis of branched-chain amino acids (BCAA). Catalyzes an alkyl-migration followed by a ketol-acid reduction of (S)-2-acetolactate (S2AL) to yield (R)-2,3-dihydroxy-isovalerate. In the isomerase reaction, S2AL is rearranged via a Mg-dependent methyl migration to produce 3-hydroxy-3-methyl-2-ketobutyrate (HMKB). In the reductase reaction, this 2-ketoacid undergoes a metal-dependent reduction by NADPH to yield (R)-2,3-dihydroxy-isovalerate. The protein is Ketol-acid reductoisomerase (NADP(+)) of Afipia carboxidovorans (strain ATCC 49405 / DSM 1227 / KCTC 32145 / OM5) (Oligotropha carboxidovorans).